Here is a 161-residue protein sequence, read N- to C-terminus: Vasotocin-neurophysin VT (161 aa).

The first 19 residues, 1–19, serve as a signal peptide directing secretion; the sequence is MAEPSLPLSFLCLLALSSA. Cys-20 and Cys-25 are joined by a disulfide. At Gly-28 the chain carries Glycine amide. Disulfide bonds link Cys-41–Cys-85, Cys-44–Cys-58, Cys-52–Cys-75, Cys-59–Cys-65, Cys-92–Cys-104, Cys-98–Cys-116, and Cys-105–Cys-110.

The protein belongs to the vasopressin/oxytocin family. In terms of processing, seven disulfide bonds are present in neurophysin.

Its subcellular location is the secreted. Vasotocin is an antidiuretic hormone. This chain is Vasotocin-neurophysin VT, found in Gallus gallus (Chicken).